The chain runs to 35 residues: Augerpeptide hheTx5 (35 aa).

In terms of processing, contains 4 disulfide bonds. Expressed by the venom duct.

The protein resides in the secreted. This chain is Augerpeptide hheTx5, found in Hastula hectica (Sea snail).